We begin with the raw amino-acid sequence, 262 residues long: Phosphatidylglycerol--prolipoprotein diacylglyceryl transferase (262 aa).

The next 4 membrane-spanning stretches (helical) occupy residues 9 to 29 (LGPLAIRWYALCIVTGLILAV), 41 to 61 (IIPDDILDFILVAFPLAILGA), 80 to 100 (IFAIWNGGLAIYGGLITGALV), and 109 to 129 (LINTWDFLDIAAPSVMIAQSL). An a 1,2-diacyl-sn-glycero-3-phospho-(1'-sn-glycerol)-binding site is contributed by Arg-131. Helical transmembrane passes span 167–187 (QPTFLYESLWNLLGFALILIF), 197–217 (GHITAFYLIWYGFGRMVIEGM), and 226–246 (GFRVSQWLSVVLIGLGIMIVI).

The protein belongs to the Lgt family.

The protein localises to the cell membrane. The catalysed reaction is L-cysteinyl-[prolipoprotein] + a 1,2-diacyl-sn-glycero-3-phospho-(1'-sn-glycerol) = an S-1,2-diacyl-sn-glyceryl-L-cysteinyl-[prolipoprotein] + sn-glycerol 1-phosphate + H(+). Its pathway is protein modification; lipoprotein biosynthesis (diacylglyceryl transfer). In terms of biological role, catalyzes the transfer of the diacylglyceryl group from phosphatidylglycerol to the sulfhydryl group of the N-terminal cysteine of a prolipoprotein, the first step in the formation of mature lipoproteins. The sequence is that of Phosphatidylglycerol--prolipoprotein diacylglyceryl transferase from Streptococcus pneumoniae serotype 4 (strain ATCC BAA-334 / TIGR4).